A 509-amino-acid polypeptide reads, in one-letter code: Aromatase (509 aa).

Cys437 is a heme binding site.

It belongs to the cytochrome P450 family. It depends on heme as a cofactor.

It localises to the membrane. It carries out the reaction testosterone + 3 reduced [NADPH--hemoprotein reductase] + 3 O2 = 17beta-estradiol + formate + 3 oxidized [NADPH--hemoprotein reductase] + 4 H2O + 4 H(+). The catalysed reaction is androst-4-ene-3,17-dione + 3 reduced [NADPH--hemoprotein reductase] + 3 O2 = estrone + formate + 3 oxidized [NADPH--hemoprotein reductase] + 4 H2O + 4 H(+). Its function is as follows. Catalyzes the formation of aromatic C18 estrogens from C19 androgens. The sequence is that of Aromatase (CYP19A1) from Taeniopygia guttata (Zebra finch).